Here is a 102-residue protein sequence, read N- to C-terminus: Thioredoxin (102 aa).

The region spanning 1-102 is the Thioredoxin domain; sequence MVKVVSAENF…SLIRLINQHS (102 aa). Cysteines 28 and 31 form a disulfide.

The protein belongs to the thioredoxin family.

Its function is as follows. Participates in various redox reactions through the reversible oxidation of its active center dithiol to a disulfide and catalyzes dithiol-disulfide exchange reactions. This is Thioredoxin (trxA) from Chlamydia caviae (strain ATCC VR-813 / DSM 19441 / 03DC25 / GPIC) (Chlamydophila caviae).